A 919-amino-acid polypeptide reads, in one-letter code: Tight junction protein ZO-3 (919 aa).

The 83-residue stretch at 11-93 (TATLSKDPRR…MANITVKRPR (83 aa)) folds into the PDZ 1 domain. The segment at 92–173 (PRRIHLPATK…SPGGGSEANG (82 aa)) is disordered. Residue S112 is modified to Phosphoserine. A compositionally biased stretch (basic and acidic residues) spans 117–131 (GPQRVEEVDQGRGYD). Position 136 is a phosphoserine (S136). A compositionally biased stretch (basic residues) spans 147–163 (RRPRPGRRGRAGSHGRR). Residues S164, S169, S203, and S319 each carry the phosphoserine modification. Residues 195–272 (SVLVKRRDSE…KLSLLVLRDR (78 aa)) enclose the PDZ 2 domain. The segment at 279 to 377 (IPPAVSDSDS…SSQSMEDRGY (99 aa)) is disordered. Position 325 is a phosphothreonine (T325). A Phosphoserine modification is found at S327. Basic and acidic residues predominate over residues 332-360 (PRLRRESSVDSRTISEPDEQRSELPRESS). Phosphoserine is present on S371. A PDZ 3 domain is found at 380 to 446 (DTRVVRFLKG…LTREEAVQFL (67 aa)). The SH3 domain maps to 475–549 (GDSFYIRTHF…PNQSRAEQLA (75 aa)). The Guanylate kinase-like domain maps to 580–761 (LRRGAKKTTQ…WYQELKAIIR (182 aa)). At S591 the chain carries Phosphoserine. The span at 791 to 801 (ADSSADLSCDS) shows a compositional bias: low complexity. Disordered regions lie at residues 791–886 (ADSS…DSMR) and 899–919 (RVHD…ATDL). Over residues 812–828 (EGGAYTDGEGYTDGEGG) the composition is skewed to gly residues. Phosphoserine is present on residues S856, S905, and S906.

Belongs to the MAGUK family. In terms of assembly, interacts with occludin OCLN, claudins and TPJ1. Interacts with PATJ. Interacts with UBN1. Interacts with FASLG. Interacts with CCND1. Phosphorylated.

It localises to the cell membrane. Its subcellular location is the cell junction. The protein localises to the tight junction. It is found in the nucleus. Its function is as follows. TJP1, TJP2, and TJP3 are closely related scaffolding proteins that link tight junction (TJ) transmembrane proteins such as claudins, junctional adhesion molecules, and occludin to the actin cytoskeleton. The tight junction acts to limit movement of substances through the paracellular space and as a boundary between the compositionally distinct apical and basolateral plasma membrane domains of epithelial and endothelial cells. Binds and recruits PATJ to tight junctions where it connects and stabilizes apical and lateral components of tight junctions. Promotes cell-cycle progression through the sequestration of cyclin D1 (CCND1) at tight junctions during mitosis which prevents CCND1 degradation during M-phase and enables S-phase transition. With TJP1 and TJP2, participates in the junctional retention and stability of the transcription factor DBPA, but is not involved in its shuttling to the nucleus. Contrary to TJP2, TJP3 is dispensable for individual viability, embryonic development, epithelial differentiation, and the establishment of TJs, at least in the laboratory environment. The protein is Tight junction protein ZO-3 (TJP3) of Homo sapiens (Human).